Reading from the N-terminus, the 919-residue chain is uncharacterized protein (919 aa).

A compositionally biased stretch (low complexity) spans 1 to 15 (MEALILLSSQQSGSI). Disordered stretches follow at residues 1–167 (MEAL…DLEN), 179–312 (RFKP…STPS), 415–491 (HIYE…RLSL), 553–739 (QQQQ…TIKP), 751–863 (THNE…NNII), and 883–906 (LNIN…DHIN). A compositionally biased stretch (polar residues) spans 16-25 (KNNCASTSDI). Composition is skewed to low complexity over residues 34-75 (IVIV…SSSS), 96-107 (SSPSSSPNTPKT), and 141-153 (TPTT…TPIK). The span at 154 to 167 (PVKDPKEKEKDLEN) shows a compositional bias: basic and acidic residues. Residues 186 to 292 (NNTNNNNNIN…QQSSPTSSQT (107 aa)) show a composition bias toward low complexity. Positions 420–433 (PNENNNGGSFQKPN) are enriched in polar residues. Low complexity-rich tracts occupy residues 450-471 (GVSG…PSHP), 553-564 (QQQQQQQQQSSS), 573-589 (SQPQ…QTPQ), and 618-635 (HMPQ…MPHS). A compositionally biased stretch (polar residues) spans 678 to 695 (YGSSPNLNGGKGSNNFLQ). Positions 712-723 (SSVDSYSNSSPT) are enriched in low complexity. Positions 754 to 768 (ENYMSSPRQPLSPHN) are enriched in polar residues. The span at 785–797 (PHEHCNYIDKNDE) shows a compositional bias: basic and acidic residues. Residues 798 to 863 (YYSNNNNNNN…NNNNNNNNII (66 aa)) are compositionally biased toward low complexity. The span at 883 to 899 (LNINHQDGPNSASSTPR) shows a compositional bias: polar residues.

This is an uncharacterized protein from Dictyostelium discoideum (Social amoeba).